Reading from the N-terminus, the 304-residue chain is Glutaminase (304 aa).

The substrate site is built by Ser63, Asn113, Glu157, Asn164, Tyr188, Tyr240, and Val258.

Belongs to the glutaminase family. As to quaternary structure, homotetramer.

It catalyses the reaction L-glutamine + H2O = L-glutamate + NH4(+). This Chromobacterium violaceum (strain ATCC 12472 / DSM 30191 / JCM 1249 / CCUG 213 / NBRC 12614 / NCIMB 9131 / NCTC 9757 / MK) protein is Glutaminase.